Consider the following 367-residue polypeptide: Peroxidase 1 (367 aa).

A signal peptide spans 1 to 33 (MAKESKLTAGVAAALTVVAACALCLLLPATARA). Gln34 bears the Pyrrolidone carboxylic acid mark. Cystine bridges form between Cys44/Cys125, Cys77/Cys82, Cys131/Cys335, and Cys209/Cys244. Residue His75 is the Proton acceptor of the active site. Asp76, Val79, Gly81, Asp83, and Ser85 together coordinate Ca(2+). An N-linked (GlcNAc...) asparagine glycan is attached at Asn164. Pro172 serves as a coordination point for substrate. His202 lines the heme b pocket. Residue Thr203 participates in Ca(2+) binding. N-linked (GlcNAc...) asparagine glycans are attached at residues Asn218 and Asn247. Ca(2+)-binding residues include Asp259, Thr262, and Asp267. A glycan (N-linked (GlcNAc...) asparagine) is linked at Asn303.

This sequence belongs to the peroxidase family. Classical plant (class III) peroxidase subfamily. Heme b serves as cofactor. Ca(2+) is required as a cofactor. As to expression, expressed in the root tip meristems.

It is found in the secreted. It localises to the vacuole. The enzyme catalyses 2 a phenolic donor + H2O2 = 2 a phenolic radical donor + 2 H2O. Functionally, removal of H(2)O(2), oxidation of toxic reductants, biosynthesis and degradation of lignin, suberization, auxin catabolism, response to environmental stresses such as wounding, pathogen attack and oxidative stress. These functions might be dependent on each isozyme/isoform in each plant tissue. This is Peroxidase 1 (PER1) from Zea mays (Maize).